The primary structure comprises 737 residues: UPF0507 protein YML002W (737 aa).

The VPS9 domain occupies 1-83; that stretch reads MDSHQLELPD…FEDFNKNTGN (83 aa).

Belongs to the UPF0507 family.

The polypeptide is UPF0507 protein YML002W (Saccharomyces cerevisiae (strain ATCC 204508 / S288c) (Baker's yeast)).